A 734-amino-acid polypeptide reads, in one-letter code: Photosystem I P700 chlorophyll a apoprotein A2 (734 aa).

A run of 8 helical transmembrane segments spans residues 46–69 (IFAS…FHVA), 135–158 (LYSG…LHLQ), 175–199 (LNHH…HVAI), 273–291 (MAHH…GHMY), 330–353 (LHFQ…QHMY), 369–395 (AALY…IFFI), 417–439 (AIIS…LYVH), and 517–535 (FLVH…LILV). [4Fe-4S] cluster contacts are provided by cysteine 559 and cysteine 568. The next 2 membrane-spanning stretches (helical) occupy residues 575–596 (AFYL…YWHW) and 643–665 (LSVW…MFLI). Residues histidine 654, methionine 662, and tyrosine 670 each contribute to the chlorophyll a site. Tryptophan 671 lines the phylloquinone pocket. The helical transmembrane segment at 707 to 727 (LVGLAHFSVGYIFTYAAFLIA) threads the bilayer.

Belongs to the PsaA/PsaB family. In terms of assembly, the PsaA/B heterodimer binds the P700 chlorophyll special pair and subsequent electron acceptors. PSI consists of a core antenna complex that captures photons, and an electron transfer chain that converts photonic excitation into a charge separation. The eukaryotic PSI reaction center is composed of at least 11 subunits. P700 is a chlorophyll a/chlorophyll a' dimer, A0 is one or more chlorophyll a, A1 is one or both phylloquinones and FX is a shared 4Fe-4S iron-sulfur center. serves as cofactor.

It is found in the plastid. The protein localises to the chloroplast thylakoid membrane. It carries out the reaction reduced [plastocyanin] + hnu + oxidized [2Fe-2S]-[ferredoxin] = oxidized [plastocyanin] + reduced [2Fe-2S]-[ferredoxin]. PsaA and PsaB bind P700, the primary electron donor of photosystem I (PSI), as well as the electron acceptors A0, A1 and FX. PSI is a plastocyanin-ferredoxin oxidoreductase, converting photonic excitation into a charge separation, which transfers an electron from the donor P700 chlorophyll pair to the spectroscopically characterized acceptors A0, A1, FX, FA and FB in turn. Oxidized P700 is reduced on the lumenal side of the thylakoid membrane by plastocyanin. This is Photosystem I P700 chlorophyll a apoprotein A2 from Antirrhinum majus (Garden snapdragon).